The following is a 203-amino-acid chain: Sec-independent protein translocase protein TatB (203 aa).

A helical transmembrane segment spans residues 1–21 (MFDIGWTELLVIAVVLIVVVG). The segment at 179 to 203 (KPKRTTAVRKPATLKKPAQTKKDEA) is disordered.

Belongs to the TatB family. The Tat system comprises two distinct complexes: a TatABC complex, containing multiple copies of TatA, TatB and TatC subunits, and a separate TatA complex, containing only TatA subunits. Substrates initially bind to the TatABC complex, which probably triggers association of the separate TatA complex to form the active translocon.

It localises to the cell inner membrane. Part of the twin-arginine translocation (Tat) system that transports large folded proteins containing a characteristic twin-arginine motif in their signal peptide across membranes. Together with TatC, TatB is part of a receptor directly interacting with Tat signal peptides. TatB may form an oligomeric binding site that transiently accommodates folded Tat precursor proteins before their translocation. The sequence is that of Sec-independent protein translocase protein TatB from Rhizobium johnstonii (strain DSM 114642 / LMG 32736 / 3841) (Rhizobium leguminosarum bv. viciae).